We begin with the raw amino-acid sequence, 327 residues long: Interleukin-12 subunit beta (327 aa).

The first 22 residues, 1 to 22, serve as a signal peptide directing secretion; it reads MCHQKLTISWFAVVLLASPLMA. One can recognise an Ig-like C2-type domain in the interval 23–106; that stretch reads IWELEKDVYV…LSHSRLLLHK (84 aa). A disulfide bridge links C50 with C90. N-linked (GlcNAc...) asparagine glycosylation is found at N125, N135, N223, and N315. The 90-residue stretch at 238–327 folds into the Fibronectin type-III domain; that stretch reads PPKNLQLKPL…WSRWVSVPCS (90 aa).

It belongs to the IL-12B family. Heterodimer with IL12A; disulfide-linked. The heterodimer is known as interleukin IL-12. Heterodimer with IL23A; disulfide-linked. The heterodimer is known as interleukin IL-23. Also secreted as a monomer. Interacts with NBR1; this interaction promotes IL-12 secretion.

The protein resides in the secreted. In terms of biological role, cytokine that can act as a growth factor for activated T and NK cells, enhance the lytic activity of NK/lymphokine-activated killer cells, and stimulate the production of IFN-gamma by resting PBMC. Functionally, associates with IL23A to form the IL-23 interleukin, a heterodimeric cytokine which functions in innate and adaptive immunity. IL-23 may constitute with IL-17 an acute response to infection in peripheral tissues. IL-23 binds to a heterodimeric receptor complex composed of IL12RB1 and IL23R, activates the Jak-Stat signaling cascade, stimulates memory rather than naive T-cells and promotes production of pro-inflammatory cytokines. IL-23 induces autoimmune inflammation and thus may be responsible for autoimmune inflammatory diseases and may be important for tumorigenesis. This is Interleukin-12 subunit beta (IL12B) from Mesocricetus auratus (Golden hamster).